The sequence spans 233 residues: Cysteine-rich venom protein LIO1 (233 aa).

The signal sequence occupies residues 1–18 (MIVFILLSFAAVLQQSFG). The SCP domain occupies 37–165 (VDTHNSYRRS…PYNYFYVCQY (129 aa)). Intrachain disulfides connect cysteine 74/cysteine 152, cysteine 91/cysteine 166, cysteine 147/cysteine 163, cysteine 185/cysteine 192, cysteine 188/cysteine 197, cysteine 210/cysteine 228, and cysteine 219/cysteine 232. The region spanning 201-233 (CTSENVFTNCNDMVKESGCQDERMKSICPASCF) is the ShKT domain.

The protein belongs to the CRISP family. In terms of tissue distribution, expressed by the venom gland.

It localises to the secreted. In terms of biological role, blocks contraction of smooth muscle elicited by high potassium-induced depolarization, but does not block caffeine-stimulated contraction. May target voltage-gated calcium channels on smooth muscle. The polypeptide is Cysteine-rich venom protein LIO1 (Erythrolamprus poecilogyrus (Water snake)).